Here is a 535-residue protein sequence, read N- to C-terminus: Cytochrome c oxidase subunit 1 (535 aa).

Residues valine 21–leucine 43 form a helical membrane-spanning segment. Residues glutamate 44 and glycine 49 each coordinate Ca(2+). Transmembrane regions (helical) follow at residues valine 63–glycine 85, isoleucine 106–alanine 128, isoleucine 153–isoleucine 175, proline 188–alanine 210, tyrosine 242–valine 264, and proline 271–tryptophan 293. Histidine 67 is a binding site for Fe(II)-heme a. Histidine 246 provides a ligand contact to Cu cation. Positions histidine 246–tyrosine 250 form a cross-link, 1'-histidyl-3'-tyrosine (His-Tyr). Tyrosine 250 serves as a coordination point for O2. Cu cation is bound by residues histidine 295 and histidine 296. Helical transmembrane passes span alanine 308–alanine 330 and threonine 342–alanine 364. The Mg(2+) site is built by histidine 373 and aspartate 374. 3 consecutive transmembrane segments (helical) span residues valine 379–tryptophan 401, leucine 414–leucine 436, and asparagine 456–tyrosine 478. Position 381 (histidine 381) interacts with heme a3. Histidine 383 provides a ligand contact to Fe(II)-heme a.

Belongs to the heme-copper respiratory oxidase family. Component of the cytochrome c oxidase (complex IV, CIV), a multisubunit enzyme composed of a catalytic core of 3 subunits and several supernumerary subunits. The complex exists as a monomer or a dimer and forms supercomplexes (SCs) in the inner mitochondrial membrane with ubiquinol-cytochrome c oxidoreductase (cytochrome b-c1 complex, complex III, CIII). Requires heme as cofactor. Cu cation serves as cofactor.

The protein localises to the mitochondrion inner membrane. The enzyme catalyses 4 Fe(II)-[cytochrome c] + O2 + 8 H(+)(in) = 4 Fe(III)-[cytochrome c] + 2 H2O + 4 H(+)(out). It functions in the pathway energy metabolism; oxidative phosphorylation. Its function is as follows. Component of the cytochrome c oxidase, the last enzyme in the mitochondrial electron transport chain which drives oxidative phosphorylation. The respiratory chain contains 3 multisubunit complexes succinate dehydrogenase (complex II, CII), ubiquinol-cytochrome c oxidoreductase (cytochrome b-c1 complex, complex III, CIII) and cytochrome c oxidase (complex IV, CIV), that cooperate to transfer electrons derived from NADH and succinate to molecular oxygen, creating an electrochemical gradient over the inner membrane that drives transmembrane transport and the ATP synthase. Cytochrome c oxidase is the component of the respiratory chain that catalyzes the reduction of oxygen to water. Electrons originating from reduced cytochrome c in the intermembrane space (IMS) are transferred via the dinuclear copper A center (CU(A)) of subunit 2 and heme A of subunit 1 to the active site in subunit 1, a binuclear center (BNC) formed by heme A3 and copper B (CU(B)). The BNC reduces molecular oxygen to 2 water molecules using 4 electrons from cytochrome c in the IMS and 4 protons from the mitochondrial matrix. The protein is Cytochrome c oxidase subunit 1 (COX1) of Yarrowia lipolytica (strain CLIB 122 / E 150) (Yeast).